We begin with the raw amino-acid sequence, 270 residues long: Tetraspanin-17 (270 aa).

At 1-19 the chain is on the cytoplasmic side; the sequence is MPGKHQHFQEPEVGCCGKY. A helical transmembrane segment spans residues 20-40; the sequence is FLFGFNIVFWVLGALFLAIGL. Residues 41–63 are Extracellular-facing; it reads WAWSEKGVLSNISALTDLGGLDP. The N-linked (GlcNAc...) asparagine glycan is linked to Asn-51. A helical membrane pass occupies residues 64 to 84; the sequence is VWLFVVVGGVMSVLGFAGCIG. The Cytoplasmic segment spans residues 85 to 94; the sequence is ALRENTFLLK. Residues 95–115 traverse the membrane as a helical segment; sequence FFSVFLGLIFFLELATGILAF. At 116–234 the chain is on the extracellular side; sequence VFKDWIRDQL…GQFEKWLQDN (119 aa). 4 disulfide bridges follow: Cys-155-Cys-223, Cys-156-Cys-188, Cys-172-Cys-182, and Cys-189-Cys-202. The N-linked (GlcNAc...) asparagine glycan is linked to Asn-171. A helical transmembrane segment spans residues 235–255; sequence LIVVAGVFVGIALLQIFGICL. Residues 256–270 are Cytoplasmic-facing; it reads AQNLVSDIKAVKANW.

This sequence belongs to the tetraspanin (TM4SF) family. Interacts with ADAM10; the interaction influences ADAM10 substrate specificity, endocytosis and turnover.

The protein resides in the cell membrane. Part of TspanC8 subgroup, composed of 6 members that interact with the transmembrane metalloprotease ADAM10. This interaction is required for ADAM10 exit from the endoplasmic reticulum and for enzymatic maturation and trafficking to the cell surface as well as substrate specificity. Different TspanC8/ADAM10 complexes have distinct substrates. Seems to regulate VE-cadherin expression in endothelial cells probably through interaction with ADAM10, promoting leukocyte transmigration. The polypeptide is Tetraspanin-17 (TSPAN17) (Bos taurus (Bovine)).